The sequence spans 161 residues: Carboxysome assembly protein CcmN (161 aa).

A disordered region spans residues 111–140 (LLSAETPPTTATVSSSEPAGRSPQSSAIAH). Residues 116–137 (TPPTTATVSSSEPAGRSPQSSA) are compositionally biased toward polar residues. Residues 144-161 (VYGKEQFLRMRQSMFPDR) carry the Encapsulation peptide motif.

It belongs to the CcmN family. As to quaternary structure, interacts with CcmM via the N-terminus of CcmN. Interacts with CcmK2 via the 18 C-terminal residues.

The protein localises to the carboxysome. In terms of biological role, required for carboxysome formation; the N-terminus interacts with CcmM which itself binds RuBisCO (ribulose bisphosphate carboxylase, rbcL-rbcS), while the C-terminal 18 residues interact with carboxysome shell protein CcmK2. Required for growth in normal air. Its function is as follows. Beta-carboxysome assembly initiates when soluble RuBisCO is condensed into a liquid matrix in a pre-carboxysome by the RbcS-like domains of probably both CcmM58 and CcmM35. CcmN interacts with the N-terminus of CcmM58, and then recruits the CcmK2 major shell protein via CcmN's encapsulation peptide. Shell formation requires CcmK proteins and CcmO. CcmL caps the otherwise elongated carboxysome. Once fully encapsulated carboxysomes are formed, they migrate within the cell probably via interactions with the cytoskeleton. The sequence is that of Carboxysome assembly protein CcmN from Synechococcus elongatus (strain ATCC 33912 / PCC 7942 / FACHB-805) (Anacystis nidulans R2).